Reading from the N-terminus, the 185-residue chain is Ribosome-recycling factor (185 aa).

The protein belongs to the RRF family.

Its subcellular location is the cytoplasm. Responsible for the release of ribosomes from messenger RNA at the termination of protein biosynthesis. May increase the efficiency of translation by recycling ribosomes from one round of translation to another. In Hahella chejuensis (strain KCTC 2396), this protein is Ribosome-recycling factor.